Consider the following 332-residue polypeptide: NAD-dependent protein deacetylase hst2 (332 aa).

A Deacetylase sirtuin-type domain is found at 7-269 (KHVDSSKHLE…RALCKLLGWS (263 aa)). NAD(+) is bound by residues 35–55 (GAGI…TGIY) and 118–121 (QNID). His138 functions as the Proton acceptor in the catalytic mechanism. Zn(2+) contacts are provided by Cys146, Cys149, Cys170, and Cys173. NAD(+)-binding positions include 210 to 212 (GTS), 235 to 237 (NRE), and Cys255.

The protein belongs to the sirtuin family. Class I subfamily. Zn(2+) serves as cofactor.

It is found in the cytoplasm. The protein resides in the nucleus. It carries out the reaction N(6)-acetyl-L-lysyl-[protein] + NAD(+) + H2O = 2''-O-acetyl-ADP-D-ribose + nicotinamide + L-lysyl-[protein]. In terms of biological role, NAD-dependent histone deacetylase, which could function in telomeric silencing, cell cycle progression and chromosome stability. This chain is NAD-dependent protein deacetylase hst2 (hst2), found in Schizosaccharomyces pombe (strain 972 / ATCC 24843) (Fission yeast).